Reading from the N-terminus, the 439-residue chain is Hemagglutinin-esterase (439 aa).

An N-terminal signal peptide occupies residues Met-1–Val-22. Residues Thr-12–Ala-132 form an esterase domain 1 region. Topologically, residues Phe-23–Val-407 are virion surface. The active-site Nucleophile is Ser-45. Cys-49 and Cys-70 are joined by a disulfide. Residues Asn-94, Asn-152, Asn-196, Asn-246, Asn-309, and Asn-316 are each glycosylated (N-linked (GlcNAc...) asparagine; by host). A disulfide bridge connects residues Cys-118 and Cys-167. Residues Arg-133–Tyr-281 form a receptor binding region. 2 cysteine pairs are disulfide-bonded: Cys-202–Cys-291 and Cys-210–Cys-264. The esterase domain 2 stretch occupies residues Leu-282 to Tyr-395. A disulfide bridge links Cys-322 with Cys-327. N-linked (GlcNAc...) asparagine; by host glycosylation occurs at Asn-331. Active-site charge relay system residues include Asp-342 and His-345. N-linked (GlcNAc...) asparagine; by host glycans are attached at residues Asn-360 and Asn-374. Cys-363 and Cys-387 are disulfide-bonded. The helical transmembrane segment at Ile-408–Phe-428 threads the bilayer. The Intravirion portion of the chain corresponds to Met-429–Ala-439.

Belongs to the influenza type C/coronaviruses hemagglutinin-esterase family. As to quaternary structure, homodimer; disulfide-linked. Forms a complex with the M protein in the pre-Golgi. Associates then with S-M complex to form a ternary complex S-M-HE. In terms of processing, N-glycosylated in the host RER.

The protein resides in the virion membrane. Its subcellular location is the host cell membrane. The catalysed reaction is N-acetyl-9-O-acetylneuraminate + H2O = N-acetylneuraminate + acetate + H(+). The enzyme catalyses N-acetyl-4-O-acetylneuraminate + H2O = N-acetylneuraminate + acetate + H(+). In terms of biological role, structural protein that makes short spikes at the surface of the virus. Contains receptor binding and receptor-destroying activities. Mediates de-O-acetylation of N-acetyl-4-O-acetylneuraminic acid, which is probably the receptor determinant recognized by the virus on the surface of erythrocytes and susceptible cells. This receptor-destroying activity is important for virus release as it probably helps preventing self-aggregation and ensures the efficient spread of the progeny virus from cell to cell. May serve as a secondary viral attachment protein for initiating infection, the spike protein being the major one. May become a target for both the humoral and the cellular branches of the immune system. The polypeptide is Hemagglutinin-esterase (Murine coronavirus (strain S) (MHV-S)).